We begin with the raw amino-acid sequence, 177 residues long: MSRVAKAPVNIPAGVEVKLNGQLLTVKGKNGELSREIHNAVEVNQDANALTFVPRTGVANADAQAGTARALVNAMVIGVTEGFTKKLQLVGVGYRAQMKGNVVALSLGYSHPIEHTLPAGVTGECPSQTEIVLKSADKQLIGQVAADIRAYRRPEPYKGKGVRYSDEVVRTKEAKKK.

Belongs to the universal ribosomal protein uL6 family. As to quaternary structure, part of the 50S ribosomal subunit.

In terms of biological role, this protein binds to the 23S rRNA, and is important in its secondary structure. It is located near the subunit interface in the base of the L7/L12 stalk, and near the tRNA binding site of the peptidyltransferase center. This Actinobacillus pleuropneumoniae serotype 5b (strain L20) protein is Large ribosomal subunit protein uL6.